Reading from the N-terminus, the 478-residue chain is MKILFCSSEAFPFSKTGGLADMAYFLPKSINVLGHEIVVITPYYEGIKKHHETMTYLGTKTIYMGHGEVVVNYYKLVYESITYIFVQNMHYFEREGLYGYHDDAERFAAFSYAILESLDIIEFYPDILHINDWQTSMIPYLLDKHYRHQSFNYFRIHTLLTIHNLQYQGDFDKDVAKFFNTDFDYTYIHFDRVNYLKAGIERATKINTVSPTYSKEVMTREYGFSLDGSLQNRINDFSGILNGIDDQNTFNPKTDKYLIKTYSVSNHKSGKNLNKQFLLEHFGLDKNLDEPLIAYVGRLADQKGLGLMEYCLEEVIQYSNAKFILMGSGDKAYEDYFRYLTYKYPNKVGNYIGFNEKIAHIIYGASDIFMMPSRFEPCGLGQMIAMKYGSLPIVRETGGLKDSVIPYNKYTQEGTGFSFKNYDSYDLKEKLFEAINLYNEDKKTWQILVKQAMKSDFGLNQMARAYEELYKNIIGEKI.

Residue Lys15 participates in ADP-alpha-D-glucose binding.

Belongs to the glycosyltransferase 1 family. Bacterial/plant glycogen synthase subfamily.

It carries out the reaction [(1-&gt;4)-alpha-D-glucosyl](n) + ADP-alpha-D-glucose = [(1-&gt;4)-alpha-D-glucosyl](n+1) + ADP + H(+). It functions in the pathway glycan biosynthesis; glycogen biosynthesis. Synthesizes alpha-1,4-glucan chains using ADP-glucose. This Acholeplasma laidlawii (strain PG-8A) protein is Glycogen synthase.